Here is a 322-residue protein sequence, read N- to C-terminus: MATSSAAAAASTPVNANTITETKNSTFFFDFMMGGVSAAVSKTAAAPIERVKLLIQNQDEMIRAGRLSHRYKGIGECFKRTAAEEGVISLWRGNTANVLRYFPTQALNFAFKDKFKKMFGYKKERDGYAKWFAGNLASGGAAGAASLLFVYSLDYARTRLANDAKSAKKGGERQFNGLVDVYRKTYRSDGLRGLYRGFGPSVVGIVVYRGLYFGMYDTLKPVVLVGPLEGNFLASFLLGWAVTTGSGVASYPLDTIRRRMMMTSGEAVKYSSSFECGRQILAKEGARSFFKGAGANILRGVAGAGVLSIYDQVQLLMFGKKF.

Solcar repeat units follow at residues 25-118, 130-222, and 230-316; these read STFF…FKKM, KWFA…LKPV, and GNFL…VQLL. Helical transmembrane passes span 27 to 54, 95 to 119, 128 to 148, 198 to 219, and 233 to 253; these read FFFD…VKLL, TANV…KKMF, YAKW…ASLL, FGPS…YDTL, and LASF…SYPL. ADP-binding residues include Arg-100 and Lys-112. Arg-257 serves as a coordination point for ADP. The important for transport activity stretch occupies residues 257-262; the sequence is RRRMMM. The short motif at 257–262 is the Nucleotide carrier signature motif element; it reads RRRMMM. A helical transmembrane segment spans residues 293-313; it reads AGANILRGVAGAGVLSIYDQV.

This sequence belongs to the mitochondrial carrier (TC 2.A.29) family. Monomer.

The protein localises to the mitochondrion inner membrane. The enzyme catalyses ADP(in) + ATP(out) = ADP(out) + ATP(in). Its activity is regulated as follows. The matrix-open state (m-state) is inhibited by the membrane-permeable bongkrekic acid (BKA). The cytoplasmic-open state (c-state) is inhibited by the membrane-impermeable toxic inhibitor carboxyatractyloside (CATR). Functionally, ADP:ATP antiporter that mediates import of ADP into the mitochondrial matrix for ATP synthesis, and export of ATP out to fuel the cell. Cycles between the cytoplasmic-open state (c-state) and the matrix-open state (m-state): operates by the alternating access mechanism with a single substrate-binding site intermittently exposed to either the cytosolic (c-state) or matrix (m-state) side of the inner mitochondrial membrane. This Schizosaccharomyces pombe (strain 972 / ATCC 24843) (Fission yeast) protein is ADP,ATP carrier protein (anc1).